Reading from the N-terminus, the 428-residue chain is Light-independent protochlorophyllide reductase subunit N (428 aa).

The [4Fe-4S] cluster site is built by C29, C54, and C115.

The protein belongs to the BchN/ChlN family. As to quaternary structure, protochlorophyllide reductase is composed of three subunits; BchL, BchN and BchB. Forms a heterotetramer of two BchB and two BchN subunits. Requires [4Fe-4S] cluster as cofactor.

It catalyses the reaction chlorophyllide a + oxidized 2[4Fe-4S]-[ferredoxin] + 2 ADP + 2 phosphate = protochlorophyllide a + reduced 2[4Fe-4S]-[ferredoxin] + 2 ATP + 2 H2O. It participates in porphyrin-containing compound metabolism; bacteriochlorophyll biosynthesis (light-independent). Functionally, component of the dark-operative protochlorophyllide reductase (DPOR) that uses Mg-ATP and reduced ferredoxin to reduce ring D of protochlorophyllide (Pchlide) to form chlorophyllide a (Chlide). This reaction is light-independent. The NB-protein (BchN-BchB) is the catalytic component of the complex. The polypeptide is Light-independent protochlorophyllide reductase subunit N (Cereibacter sphaeroides (strain ATCC 17025 / ATH 2.4.3) (Rhodobacter sphaeroides)).